A 271-amino-acid polypeptide reads, in one-letter code: Protein FANTASTIC FOUR 1 (271 aa).

The FAF domain occupies 114-168 (NSFPPPLNSVNGFNNSRMVKSYKEDGRLVVQAIRVCSPPRCFVSERREGRLRLCL). A disordered region spans residues 174–255 (NSQDAEEEFE…KRRCNENGCE (82 aa)). Residues 177–224 (DAEEEFEEEDEDDQYDAEEEEEEEEEEEEEEEEEEEEEEEEEEEDEEG) show a composition bias toward acidic residues. A compositionally biased stretch (basic residues) spans 237-247 (GNKKVSNRPKR).

Belongs to the fantastic four family. Expressed in the shoot apex, stamens, anthers and young siliques. Detected in provascular and vascular tissue.

Its function is as follows. Able to repress WUS when constitutively overexpressed, but have no effect on CLV3. The protein is Protein FANTASTIC FOUR 1 (FAF1) of Arabidopsis thaliana (Mouse-ear cress).